The chain runs to 342 residues: N-acetyl-gamma-glutamyl-phosphate reductase (342 aa).

Cysteine 149 is a catalytic residue.

Belongs to the NAGSA dehydrogenase family. Type 1 subfamily.

The protein resides in the cytoplasm. The enzyme catalyses N-acetyl-L-glutamate 5-semialdehyde + phosphate + NADP(+) = N-acetyl-L-glutamyl 5-phosphate + NADPH + H(+). It participates in amino-acid biosynthesis; L-arginine biosynthesis; N(2)-acetyl-L-ornithine from L-glutamate: step 3/4. Catalyzes the NADPH-dependent reduction of N-acetyl-5-glutamyl phosphate to yield N-acetyl-L-glutamate 5-semialdehyde. The sequence is that of N-acetyl-gamma-glutamyl-phosphate reductase from Nitrosospira multiformis (strain ATCC 25196 / NCIMB 11849 / C 71).